The chain runs to 132 residues: Histone H2A.1 (132 aa).

It belongs to the histone H2A family. As to quaternary structure, the nucleosome is a histone octamer containing two molecules each of H2A, H2B, H3 and H4 assembled in one H3-H4 heterotetramer and two H2A-H2B heterodimers. The octamer wraps approximately 147 bp of DNA.

It localises to the nucleus. The protein localises to the chromosome. Its function is as follows. Core component of nucleosome. Nucleosomes wrap and compact DNA into chromatin, limiting DNA accessibility to the cellular machineries which require DNA as a template. Histones thereby play a central role in transcription regulation, DNA repair, DNA replication and chromosomal stability. DNA accessibility is regulated via a complex set of post-translational modifications of histones, also called histone code, and nucleosome remodeling. The chain is Histone H2A.1 from Leishmania infantum.